The primary structure comprises 243 residues: Probable transcriptional regulatory protein Smlt3713 (243 aa).

Belongs to the TACO1 family.

Its subcellular location is the cytoplasm. In Stenotrophomonas maltophilia (strain K279a), this protein is Probable transcriptional regulatory protein Smlt3713.